We begin with the raw amino-acid sequence, 206 residues long: Large ribosomal subunit protein mL40 (206 aa).

Residues 1–46 (MATAAMLCAARALRPRSWIPGTCQAQVRHTHQRASLLSFWELIPMR) constitute a mitochondrion transit peptide. The interval 170–190 (PFEKEGPHYTPPVPNYQAPEG) is disordered.

Belongs to the mitochondrion-specific ribosomal protein mL40 family. As to quaternary structure, component of the mitochondrial ribosome large subunit (39S) which comprises a 16S rRNA and about 50 distinct proteins.

It localises to the mitochondrion. The polypeptide is Large ribosomal subunit protein mL40 (Mrpl40) (Rattus norvegicus (Rat)).